A 243-amino-acid chain; its full sequence is Cytochrome c oxidase subunit 2 (243 aa).

Over 1–34 (MNNIIHNDAPTPWGIYFQDGASPVYDGIVELHDQ) the chain is Mitochondrial intermembrane. Residues 35–55 (VLFYLLIVLVGVSWILFSTIL) form a helical membrane-spanning segment. The Mitochondrial matrix segment spans residues 56-74 (RFRGSGIVHKYHNHSTTIE). Residues 75–97 (FVWTVSPALLLIAIAFPSFKLLY) form a helical membrane-spanning segment. At 98–243 (LMDEVIDPSI…EKFLSWLDNQ (146 aa)) the chain is on the mitochondrial intermembrane side. Residues His178, Cys213, Glu215, Cys217, His221, and Met224 each coordinate Cu cation. Glu215 contributes to the Mg(2+) binding site.

It belongs to the cytochrome c oxidase subunit 2 family. In terms of assembly, component of the cytochrome c oxidase (complex IV, CIV), a multisubunit enzyme composed of a catalytic core of 3 subunits and several supernumerary subunits. The complex exists as a monomer or a dimer and forms supercomplexes (SCs) in the inner mitochondrial membrane with ubiquinol-cytochrome c oxidoreductase (cytochrome b-c1 complex, complex III, CIII). Cu cation serves as cofactor.

Its subcellular location is the mitochondrion inner membrane. It carries out the reaction 4 Fe(II)-[cytochrome c] + O2 + 8 H(+)(in) = 4 Fe(III)-[cytochrome c] + 2 H2O + 4 H(+)(out). Component of the cytochrome c oxidase, the last enzyme in the mitochondrial electron transport chain which drives oxidative phosphorylation. The respiratory chain contains 3 multisubunit complexes succinate dehydrogenase (complex II, CII), ubiquinol-cytochrome c oxidoreductase (cytochrome b-c1 complex, complex III, CIII) and cytochrome c oxidase (complex IV, CIV), that cooperate to transfer electrons derived from NADH and succinate to molecular oxygen, creating an electrochemical gradient over the inner membrane that drives transmembrane transport and the ATP synthase. Cytochrome c oxidase is the component of the respiratory chain that catalyzes the reduction of oxygen to water. Electrons originating from reduced cytochrome c in the intermembrane space (IMS) are transferred via the dinuclear copper A center (CU(A)) of subunit 2 and heme A of subunit 1 to the active site in subunit 1, a binuclear center (BNC) formed by heme A3 and copper B (CU(B)). The BNC reduces molecular oxygen to 2 water molecules using 4 electrons from cytochrome c in the IMS and 4 protons from the mitochondrial matrix. The chain is Cytochrome c oxidase subunit 2 from Pneumocystis carinii.